A 553-amino-acid chain; its full sequence is Solute carrier family 22 member 12 (553 aa).

The chain crosses the membrane as a helical span at residues phenylalanine 16–methionine 36. Residues asparagine 56, asparagine 102, and asparagine 107 are each glycosylated (N-linked (GlcNAc...) asparagine). 11 consecutive transmembrane segments (helical) span residues proline 146–alanine 166, leucine 182–phenylalanine 202, phenylalanine 204–tryptophan 224, leucine 232–alanine 252, methionine 260–proline 280, phenylalanine 351–leucine 371, isoleucine 378–leucine 398, leucine 407–proline 427, serine 435–phenylalanine 455, methionine 466–valine 486, and tryptophan 495–leucine 515. Serine 534 bears the Phosphoserine mark.

The protein belongs to the major facilitator (TC 2.A.1) superfamily. Organic cation transporter (TC 2.A.1.19) family. As to quaternary structure, interacts with PDZK1. Post-translationally, N-glycosylated. In terms of tissue distribution, expressed in the proximal tubular epithelial cells in kidney.

It localises to the apical cell membrane. It catalyses the reaction urate(out) + (S)-lactate(in) = urate(in) + (S)-lactate(out). The catalysed reaction is nicotinate(in) + urate(out) = nicotinate(out) + urate(in). The enzyme catalyses urate(out) + n chloride(in) = urate(in) + n chloride(out). It carries out the reaction orotate(out) + nicotinate(in) = orotate(in) + nicotinate(out). In terms of biological role, electroneutral antiporter that translocates urate across the apical membrane of proximal tubular cells in exchange for monovalent organic or inorganic anions. Involved in renal reabsorption of urate and helps maintaining blood levels of uric acid. Mediates urate uptake by an exchange with organic anions such as (S)-lactate and nicotinate, and inorganic anion Cl(-). Other inorganic anions such as Br(-), I(-) and NO3(-) may also act as counteranions that exchange for urate. Also mediates orotate tubular uptake coupled with nicotinate efflux and to a lesser extent with lactate efflux, therefore displaying a potential role in orotate renal reabsorption. Orotate transport is Cl(-)-dependent. The polypeptide is Solute carrier family 22 member 12 (Slc22a12) (Rattus norvegicus (Rat)).